Consider the following 507-residue polypeptide: Cytochrome P450 monooxygenase nodZ (507 aa).

Transmembrane regions (helical) follow at residues 1–21 and 205–225; these read MITASTSVFGGLILAFIFSLL and GFLHCMAIAGTILGAVTPWFL. A glycan (N-linked (GlcNAc...) asparagine) is linked at Asn352. A heme-binding site is contributed by Cys445.

This sequence belongs to the cytochrome P450 family. Heme serves as cofactor.

It is found in the membrane. Its pathway is secondary metabolite biosynthesis. Functionally, cytochrome P450 monooxygenase; part of the gene cluster that mediates the biosynthesis of the indole diterpenes nodulisporic acids (NA). Nodulisporic acid A (NAA) and its chemically modified derivatives are of particular significance because of their highly potent insecticidal activity against blood-feeding arthropods and lack of observable adverse effects on mammals, in particular the tremogenicity associated with the paspaline-derived IDTs is not observed. The geranylgeranyl diphosphate (GGPP) synthase ggs1, localized outside of the cluster, is proposed to catalyze the first step in nodulisporic acid biosynthesis via conversion of farnesyl pyrophosphate and isopentyl pyrophosphate into geranylgeranyl pyrophosphate (GGPP). Condensation of indole-3-glycerol phosphate with GGPP by the prenyl transferase nodC then forms 3-geranylgeranylindole (3-GGI). Epoxidation by the FAD-dependent monooxygenase nodM leads to a single-epoxidized-GGI that is substrate of the terpene cyclase nodB for cyclization to yield emindole SB. The terminal methyl carbon, C28, of emindole SB is then oxidized by the cytochrome P450 monooxygenase nodW to produce nodulisporic acid F (NAF), the pentacyclic core of NAA. NAF is converted to nodulisporic acid E (NAE) via prenylation. This step is probably performed by one of the indole diterpene prenyltransferases nodD1 or nodD2. Several oxidation steps performed by the FAD-linked oxidoreductase nodO and one of the cytochrome P450 monooxygenase nodR, nodX or nodZ further convert NAE to nodulisporic acid D (NAD). NAD is substrate of cytochrome P450 monooxygenase nodJ to produce the precursor of nodulisporic acid C (NAC), converted to NAC by one of the indole diterpene prenyltransferases nodD1 or nodD2. The FAD-dependent monooxygenase nodY2 then oxidizes NAC to nodulisporic acid B (NAB). Finally NAB is converted to NAA by one of the cytochrome P450 monooxygenases nodR, nodX or nodZ. This Hypoxylon pulicicidum protein is Cytochrome P450 monooxygenase nodZ.